Here is a 121-residue protein sequence, read N- to C-terminus: Large ribosomal subunit protein eL18 (121 aa).

Belongs to the eukaryotic ribosomal protein eL18 family.

The sequence is that of Large ribosomal subunit protein eL18 from Methanospirillum hungatei JF-1 (strain ATCC 27890 / DSM 864 / NBRC 100397 / JF-1).